The primary structure comprises 354 residues: Ornithine transcarbamylase, mitochondrial (354 aa).

The N-terminal 32 residues, 1 to 32 (MLFNLKNLYRITKLTQNSKHLPRHFCRGPPNQ), are a transit peptide targeting the mitochondrion. Carbamoyl phosphate-binding positions include 90–94 (STRTR), arginine 141, and histidine 168. Residue arginine 141 participates in L-ornithine binding. L-ornithine-binding positions include asparagine 199, 263 to 267 (DTWIS), 302 to 305 (HCLP), and arginine 330. Cysteine 303 is an active-site residue. Arginine 330 provides a ligand contact to carbamoyl phosphate.

Belongs to the aspartate/ornithine carbamoyltransferase superfamily. OTCase family. As to quaternary structure, homotrimer. Cleavage of the precursor form to the active form occurs only in the kidney. Expressed in kidney, brain, heart, liver, pancreas, gizzard, small intestine and breast muscle. More abundant in mitochondrion-rich organs (heart, liver and brain) than in other organs. Activity is only detected in the kidney.

It is found in the mitochondrion matrix. The catalysed reaction is carbamoyl phosphate + L-ornithine = L-citrulline + phosphate + H(+). It participates in nitrogen metabolism; urea cycle; L-citrulline from L-ornithine and carbamoyl phosphate: step 1/1. Inhibition by ornithine increases at higher pH. In terms of biological role, catalyzes the second step of the urea cycle, the condensation of carbamoyl phosphate with L-ornithine to form L-citrulline. The urea cycle ensures the detoxification of ammonia by converting it to urea for excretion. This is Ornithine transcarbamylase, mitochondrial from Gallus gallus (Chicken).